The sequence spans 190 residues: Putative hydrolase YdeN (190 aa).

Active-site charge relay system residues include serine 71, aspartate 137, and histidine 164.

The protein belongs to the RBBP9 family.

The polypeptide is Putative hydrolase YdeN (ydeN) (Bacillus subtilis (strain 168)).